The primary structure comprises 279 residues: Histone chaperone ASF1 (279 aa).

Residues 1-143 (MSIVSLLGIK…HIVRNILAEK (143 aa)) form an interaction with HIR1 region. The interval 1–155 (MSIVSLLGIK…VTRFNIVWDN (155 aa)) is interaction with histone H3, histone H4, RAD53 and the RF-C complex. The disordered stretch occupies residues 156–279 (ENEGDLYPPE…TPKDAARSTN (124 aa)). The span at 168 to 244 (GVDDEEEEDD…DEEEGEEEVG (77 aa)) shows a compositional bias: acidic residues. A coiled-coil region spans residues 192–243 (DDQEDGEGEAEEAAEEEEEEEEKTEDNETNLEEEEEDIENSDGDEEEGEEEV). Basic and acidic residues-rich tracts occupy residues 245 to 254 (SVDKNEDGND) and 269 to 279 (STPKDAARSTN).

The protein belongs to the ASF1 family. In terms of assembly, interacts with histone H3/H4 heterodimers via both histone H3 and histone H4. Binds with higher affinity to H3/H4 heterodimers where histone H3 has been pre-acetylated on 'Lys-14'. Interacts with RAD53 and this may impair interaction with histones and chromatin assembly; the interaction is reduced upon activation of DNA damage or replication checkpoints which in turn promotes histone binding and chromatin assembly. Interacts with the CAC2 subunit of chromatin assembly factor 1 (CAF-1). Interacts with the HIR1, HIR2, HIR3 and HPC2 subunits of the HIR complex. Interacts with the RFC1, RFC2, RFC3, RFC4 and RFC5 subunits of the replication factor C (RF-C/RFC) complex; which may recruit this protein to DNA. Interacts with the SAS2, SAS4 and SAS5 subunits of the SAS/SAS-I complex. Interacts with the BDF1, BDF2, SPT15, TAF1 and TAF7 subunits of the TFIID complex. Interacts with RTT109 and VPS75; the interaction with RTT109 is direct.

Its subcellular location is the nucleus. Its function is as follows. Histone chaperone that facilitates histone deposition and histone exchange and removal during nucleosome assembly and disassembly. Facilitates histone deposition through both replication-dependent and replication-independent chromatin assembly pathways. Cooperates with chromatin assembly factor 1 (CAF-1) to promote replication-dependent chromatin assembly and with the HIR complex to promote replication-independent chromatin assembly, which may occur during transcription and DNA repair. May be required for the maintenance of a subset of replication elongation factors, including DNA polymerase epsilon, the RFC complex and PCNA, at stalled replication forks. Also required for RTT109-dependent acetylation of histone H3 on 'Lys-9' and 'Lys-56'. Promotion of RTT109-mediated histone H3 'Lys-56' acetylation is dependent on interactions with histone H3 pre-acetylated on 'Lys-14'. The polypeptide is Histone chaperone ASF1 (Saccharomyces cerevisiae (strain ATCC 204508 / S288c) (Baker's yeast)).